Consider the following 408-residue polypeptide: MNTTDNGVNCLCAICGDRATGKHYGASSCDGCKGFFRRSIRKSHVYSCRFSRQCVVDKDKRNQCRYCRLRKCFRAGMKKEAVQNERDRISTRRSTFDGSNIPSINTLAQAEVRSRQISVSSPGSSTDINVKKIASIGDVCESMKQQLLVLVEWAKYIPAFCELPLDDQVALLRAHAGEHLLLGATKRSMMYKDILLLGNNYVIHRNSCEVEISRVANRVLDELVRPFQEIQIDDNEYACLKAIVFFDPDAKGLSDPVKIKNMRFQVQIGLEDYINDRQYDSRGRFGELLLLLPTLQSITWQMIEQIQFVKLFGMVKIDNLLQEMLLGGASNDGSHLHHPMHPHLSQDPLTGQTILLGPMSTLVHADQISTPETPLPSPPQGSGQEQYKIAANQASVISHQHLSKQKQL.

The nuclear receptor DNA-binding region spans asparagine 9–asparagine 84. NR C4-type zinc fingers lie at residues cysteine 12–cysteine 32 and cysteine 48–cysteine 72. Position 94 is a phosphoserine (serine 94). The 230-residue stretch at serine 99–glycine 328 folds into the NR LBD domain. The disordered stretch occupies residues isoleucine 368–alanine 390. Phosphothreonine is present on residues threonine 370 and threonine 373. Position 377 is a phosphoserine (serine 377).

This sequence belongs to the nuclear hormone receptor family. NR2 subfamily. In terms of tissue distribution, expressed in pancreas, kidney, small intestine and testis. Weakly expressed in colon. Not expressed in liver, skeletal muscle, lung, placenta, brain, heart, peripheral blood, ovary, prostate, thymus and spleen.

It localises to the nucleus. Transcription factor. Has a lower transcription activation potential than HNF4-alpha. In Homo sapiens (Human), this protein is Hepatocyte nuclear factor 4-gamma (HNF4G).